A 259-amino-acid polypeptide reads, in one-letter code: Synaptophysin-like protein 1 (259 aa).

The Cytoplasmic segment spans residues methionine 1–leucine 33. Residues proline 28–serine 237 form the MARVEL domain. The helical transmembrane segment at glycine 34–phenylalanine 54 threads the bilayer. The Vesicular portion of the chain corresponds to lysine 55–glutamine 116. Asparagine 71 carries N-linked (GlcNAc...) asparagine glycosylation. A helical transmembrane segment spans residues phenylalanine 117 to valine 137. The Cytoplasmic portion of the chain corresponds to glycine 138 to proline 150. The chain crosses the membrane as a helical span at residues methionine 151–tryptophan 171. Residues alanine 172–asparagine 212 lie on the Vesicular side of the membrane. Residue asparagine 212 is glycosylated (N-linked (GlcNAc...) asparagine). The helical transmembrane segment at valine 213–tyrosine 233 threads the bilayer. The Cytoplasmic segment spans residues lysine 234–isoleucine 259.

Belongs to the synaptophysin/synaptobrevin family.

Its subcellular location is the cytoplasmic vesicle membrane. It localises to the melanosome. The sequence is that of Synaptophysin-like protein 1 (SYPL1) from Homo sapiens (Human).